The following is a 506-amino-acid chain: BTB/POZ domain and ankyrin repeat-containing protein NPR5 (506 aa).

The region spanning 23 to 131 (SDVTFSVEGR…LYSGQVSLVP (109 aa)) is the BTB domain. Residues 137–151 (RPGCGERGCWHTHCA) form a C2HC NPR-type zinc finger. Zn(2+)-binding residues include cysteine 140, cysteine 145, histidine 147, and cysteine 150. ANK repeat units lie at residues 278–306 (HKIR…GLNL), 307–337 (DDAL…DVNH), 342–371 (AGKT…DPNV), and 375–409 (DGVT…KLRL). The tract at residues 481 to 506 (KMNDGGDGDDGGSRGPSSLFSPHGFP) is disordered.

This sequence belongs to the plant 'ANKYRIN-BTB/POZ' family. 'NOOT-BOP-COCH-like' (NBCL) subfamily. In terms of assembly, homodimer. Interacts with TGAL5, TGAL7, TGAL8 and TGAL11.

The protein resides in the nucleus. Its subcellular location is the cytoplasm. Its pathway is protein modification; protein ubiquitination. In terms of biological role, may act as a substrate-specific adapter of an E3 ubiquitin-protein ligase complex (CUL3-RBX1-BTB) which mediates the ubiquitination and subsequent proteasomal degradation of target proteins. Transcriptional co-regulator involved in the promotion of leaf and floral meristem fate and determinacy. Required for the abscission of senescent organs, probably by regulating the cell wall disorganization in abscission zones (AZs, e.g. pulvini at the base of leaves). Maybe involved in defense response against pathogens. The polypeptide is BTB/POZ domain and ankyrin repeat-containing protein NPR5 (Oryza sativa subsp. japonica (Rice)).